Reading from the N-terminus, the 188-residue chain is dCTP deaminase (188 aa).

Residues 111 to 116, 135 to 137, Gln156, Tyr170, and Gln180 each bind dCTP; these read KSTYAR and TLE. Catalysis depends on Glu137, which acts as the Proton donor/acceptor.

It belongs to the dCTP deaminase family. As to quaternary structure, homotrimer.

It catalyses the reaction dCTP + H2O + H(+) = dUTP + NH4(+). It functions in the pathway pyrimidine metabolism; dUMP biosynthesis; dUMP from dCTP (dUTP route): step 1/2. In terms of biological role, catalyzes the deamination of dCTP to dUTP. The polypeptide is dCTP deaminase (Legionella pneumophila (strain Paris)).